Consider the following 216-residue polypeptide: Nudix hydrolase 26, chloroplastic (216 aa).

A chloroplast-targeting transit peptide spans 1 to 53 (MALYRPLLLHHPTSPSVTTFLRNYPSKPIKFSSLPFLHRCRKSRVSSSSARCC). Positions 62-209 (GYRRNVGVCL…KKPVYKEVMS (148 aa)) constitute a Nudix hydrolase domain. The short motif at 95 to 116 (GGIDEGEDPRVAVMRELKEETG) is the Nudix box element. Residues Glu110 and Glu114 each coordinate Mn(2+).

The protein belongs to the Nudix hydrolase family. The cofactor is Mg(2+). Requires Mn(2+) as cofactor. In terms of tissue distribution, expressed in roots, leaves, stems and inflorescences.

It is found in the plastid. The protein resides in the chloroplast. Its function is as follows. Mediates the hydrolysis of some nucleoside diphosphate derivatives. Can use diadenosine 5',5'''-P(1)P(5) pentaphosphate (Ap(5)A), diadenosine 5',5'''-P(1)P(4) tetraphosphate (Ap(4)A) and diadenosine 5',5'''-P(1)P(3) triphosphate (Ap(3)A) as substrates. The chain is Nudix hydrolase 26, chloroplastic (NUDT26) from Arabidopsis thaliana (Mouse-ear cress).